Consider the following 469-residue polypeptide: Probable glucuronoxylan glucuronosyltransferase F8H (469 aa).

Topologically, residues 1 to 36 (MSLDIKKPNITKTKKKKTGFVVKMQLNNNRGGNKRN) are cytoplasmic. Residues 37–57 (IFIFFFFRNYYTWILWFCLSL) form a helical; Signal-anchor for type II membrane protein membrane-spanning segment. Topologically, residues 58 to 469 (YFFTSYFSVE…RVLSQREVDM (412 aa)) are lumenal. Asn171, Asn203, Asn301, and Asn411 each carry an N-linked (GlcNAc...) asparagine glycan.

Belongs to the glycosyltransferase 47 family. Expressed in xylem cells in stems and in roots.

Its subcellular location is the golgi apparatus membrane. In terms of biological role, involved in the synthesis of the hemicellulose glucuronoxylan, a major component of secondary cell walls. Probably involved in the synthesis of the glycosyl sequence at the glucuronoxylan reducing end. The protein is Probable glucuronoxylan glucuronosyltransferase F8H (F8H) of Arabidopsis thaliana (Mouse-ear cress).